We begin with the raw amino-acid sequence, 501 residues long: Aspartate--tRNA ligase, cytoplasmic (501 aa).

Thr52 carries the phosphothreonine modification. At Lys74 the chain carries N6-acetyllysine. Glu229 serves as a coordination point for L-aspartate. Ser249 is subject to Phosphoserine. The aspartate stretch occupies residues 251–254 (QLYK). Arg273 provides a ligand contact to L-aspartate. ATP contacts are provided by residues 273–275 (RAE) and 281–283 (RHL). The residue at position 374 (Lys374) is an N6-acetyllysine. The segment at 411–415 (KQSNS) is binding site for the 3'-end of tRNA. Glu424 contributes to the ATP binding site. 2 residues coordinate L-aspartate: Ser427 and Arg431. 472–475 (GLER) contributes to the ATP binding site. Thr500 carries the phosphothreonine; by PKA modification.

It belongs to the class-II aminoacyl-tRNA synthetase family. Type 2 subfamily. As to quaternary structure, homodimer. Part of a multisubunit complex that groups tRNA ligases for Arg (RARS1), Asp (DARS1), Gln (QARS1), Ile (IARS1), Leu (LARS1), Lys (KARS1), Met (MARS1) the bifunctional ligase for Glu and Pro (EPRS1) and the auxiliary subunits AIMP1/p43, AIMP2/p38 and EEF1E1/p18.

It is found in the cytoplasm. It catalyses the reaction tRNA(Asp) + L-aspartate + ATP = L-aspartyl-tRNA(Asp) + AMP + diphosphate. Functionally, catalyzes the specific attachment of an amino acid to its cognate tRNA in a 2 step reaction: the amino acid (AA) is first activated by ATP to form AA-AMP and then transferred to the acceptor end of the tRNA. This chain is Aspartate--tRNA ligase, cytoplasmic (DARS1), found in Pongo abelii (Sumatran orangutan).